Here is a 487-residue protein sequence, read N- to C-terminus: Glutamyl-tRNA(Gln) amidotransferase subunit A (487 aa).

Catalysis depends on charge relay system residues Lys79 and Ser158. The Acyl-ester intermediate role is filled by Ser182.

The protein belongs to the amidase family. GatA subfamily. In terms of assembly, heterotrimer of A, B and C subunits.

It catalyses the reaction L-glutamyl-tRNA(Gln) + L-glutamine + ATP + H2O = L-glutaminyl-tRNA(Gln) + L-glutamate + ADP + phosphate + H(+). Allows the formation of correctly charged Gln-tRNA(Gln) through the transamidation of misacylated Glu-tRNA(Gln) in organisms which lack glutaminyl-tRNA synthetase. The reaction takes place in the presence of glutamine and ATP through an activated gamma-phospho-Glu-tRNA(Gln). In Ehrlichia chaffeensis (strain ATCC CRL-10679 / Arkansas), this protein is Glutamyl-tRNA(Gln) amidotransferase subunit A.